Here is a 129-residue protein sequence, read N- to C-terminus: Sulfurtransferase TusD (129 aa).

Cys79 functions as the Cysteine persulfide intermediate in the catalytic mechanism.

This sequence belongs to the DsrE/TusD family. Heterohexamer, formed by a dimer of trimers. The hexameric TusBCD complex contains 2 copies each of TusB, TusC and TusD. The TusBCD complex interacts with TusE.

Its subcellular location is the cytoplasm. In terms of biological role, part of a sulfur-relay system required for 2-thiolation of 5-methylaminomethyl-2-thiouridine (mnm(5)s(2)U) at tRNA wobble positions. Accepts sulfur from TusA and transfers it in turn to TusE. The chain is Sulfurtransferase TusD from Pectobacterium atrosepticum (strain SCRI 1043 / ATCC BAA-672) (Erwinia carotovora subsp. atroseptica).